The chain runs to 163 residues: Inner membrane protein YcdZ (163 aa).

Over methionine 1–asparagine 2 the chain is Cytoplasmic. A helical transmembrane segment spans residues isoleucine 3–valine 23. A topological domain (periplasmic) is located at residue serine 24. A helical membrane pass occupies residues leucine 25–glycine 45. Over glycine 46–lysine 48 the chain is Cytoplasmic. The helical transmembrane segment at glycine 49 to tyrosine 69 threads the bilayer. The Periplasmic portion of the chain corresponds to glycine 70–serine 71. A helical transmembrane segment spans residues alanine 72 to methionine 92. Residues cysteine 93–glutamine 98 lie on the Cytoplasmic side of the membrane. The helical transmembrane segment at leucine 99–glycine 119 threads the bilayer. Residues aspartate 120–lysine 122 lie on the Periplasmic side of the membrane. Residues leucine 123–leucine 143 traverse the membrane as a helical segment. Residues tryptophan 144–alanine 163 are Cytoplasmic-facing.

It to E.coli YahC.

It localises to the cell inner membrane. The chain is Inner membrane protein YcdZ (ycdZ) from Escherichia coli (strain K12).